A 433-amino-acid chain; its full sequence is Keratin, type I cytoskeletal 17 (433 aa).

The segment at 1–24 (MTTTIRQFTSSSSIKGSSGLGGGS) is disordered. Residues 1–83 (MTTTIRQFTS…GGVDGLLAGG (83 aa)) are head. Phosphoserine occurs at positions 12 and 13. Lys-15 participates in a covalent cross-link: Glycyl lysine isopeptide (Lys-Gly) (interchain with G-Cter in SUMO1); alternate. Residue Lys-15 forms a Glycyl lysine isopeptide (Lys-Gly) (interchain with G-Cter in SUMO2); alternate linkage. A phosphoserine mark is found at Ser-25, Ser-32, Ser-34, and Ser-39. Ser-44 carries the post-translational modification Phosphoserine; by RPS6KA1. Residues 84-120 (EKATMQNLNDRLASYLDKVRALEEANTELEVKIRDWY) are coil 1A. The IF rod domain maps to 84 to 395 (EKATMQNLND…RLLEGEDAHL (312 aa)). Thr-110 is subject to Phosphothreonine. The interval 121 to 138 (QKQAPGPARDYSAYYQTI) is linker 1. The interval 139 to 230 (EDLKNKILVA…NHEEEMNALR (92 aa)) is coil 1B. A linker 12 region spans residues 231 to 250 (GQVGGEINVEMDAAPGVDLS). A coil 2 region spans residues 251–392 (RILSEMRDQY…TYRRLLEGED (142 aa)). Residue Lys-278 forms a Glycyl lysine isopeptide (Lys-Gly) (interchain with G-Cter in SUMO2) linkage. Residue Thr-279 is modified to Phosphothreonine. Residue Ser-323 is modified to Phosphoserine. Positions 393–433 (AHLTQYKPKEPVTTRQVRTIVEEVQDGKVISSREQVHQTTR) are tail. Residues Lys-399, Lys-401, and Lys-420 each participate in a glycyl lysine isopeptide (Lys-Gly) (interchain with G-Cter in SUMO1); alternate cross-link. Residues Lys-399, Lys-401, and Lys-420 each participate in a glycyl lysine isopeptide (Lys-Gly) (interchain with G-Cter in SUMO2); alternate cross-link.

This sequence belongs to the intermediate filament family. As to quaternary structure, heterodimer of a type I and a type II keratin. KRT17 associates with KRT6 isomers (KRT6A or KRT6B). Interacts with TRADD and SFN. Phosphorylation at Ser-44 occurs in a growth- and stress-dependent fashion in skin keratinocytes, it has no effect on filament organization.

It is found in the cytoplasm. Type I keratin involved in the formation and maintenance of various skin appendages, specifically in determining shape and orientation of hair. Required for the correct growth of hair follicles, in particular for the persistence of the anagen (growth) state. Modulates the function of TNF-alpha in the specific context of hair cycling. Regulates protein synthesis and epithelial cell growth through binding to the adapter protein SFN and by stimulating Akt/mTOR pathway. Involved in tissue repair. May be a marker of basal cell differentiation in complex epithelia and therefore indicative of a certain type of epithelial 'stem cells'. Acts as a promoter of epithelial proliferation by acting a regulator of immune response in skin: promotes Th1/Th17-dominated immune environment contributing to the development of basaloid skin tumors. May act as an autoantigen in the immunopathogenesis of psoriasis, with certain peptide regions being a major target for autoreactive T-cells and hence causing their proliferation. This Rattus norvegicus (Rat) protein is Keratin, type I cytoskeletal 17.